We begin with the raw amino-acid sequence, 233 residues long: MEPTAPSLTEEDLTEVKKDALENLRVYLCEKIIAERHFDHLRAKKILSREDTEEISCRTSSRKRAGKLLDYLQENPKGLDTLVESIRREKTQNFLIQKITDEVLKLRNIKLEHLKGLKCSSCEPFPDGATNNLSRSNSDESNFSEKLRASTVMYHPEGESSTTPFFSTNSSLNLPVLEVGRTENTIFSSTTLPRPGDPGAPPLPPDLQLEEEGTCANSSEMFLPLRSRTVSRQ.

At methionine 1 the chain carries N-acetylmethionine. One can recognise a CARD domain in the interval 13 to 101; it reads LTEVKKDALE…QNFLIQKITD (89 aa). Residues lysine 17, lysine 31, and lysine 63 each participate in a glycyl lysine isopeptide (Lys-Gly) (interchain with G-Cter in ubiquitin) cross-link. Position 138 is a phosphoserine (serine 138). The disordered stretch occupies residues 187–233; that stretch reads FSSTTLPRPGDPGAPPLPPDLQLEEEGTCANSSEMFLPLRSRTVSRQ. A compositionally biased stretch (pro residues) spans 195 to 205; sequence PGDPGAPPLPP.

In terms of assembly, homomultimer; homooligomerized following recruitment by CARD domain-containing proteins that form a nucleating helical template that recruits BCL10 via CARD-CARD interaction. Self-associates by CARD-CARD interaction and interacts with other CARD-proteins such as CARD9, CARD10, CARD11 and CARD14. Forms a complex with CARD14 and MALT1; resulting in the formation of a CBM (CARD14-BCL10-MALT1) complex. Forms a complex with CARD11 and MALT1; resulting in the formation of a CBM (CARD11-BCL10-MALT1) complex. Forms a complex with CARD9 and MALT1; resulting in the formation of a CBM (CARD9-BCL10-MALT1) complex. Found in a membrane raft complex, at least composed of BCL10, CARD11, DPP4 and IKBKB. Binds caspase-9 with its C-terminal domain. Interacts with TRAF2 and BIRC2/c-IAP2. Interacts with PELI2 and SOCS3; these interactions may be mutually exclusive. In terms of processing, phosphorylated. Phosphorylation results in dissociation from TRAF2 and binding to BIRC2/c-IAP2. Phosphorylated by IKBKB/IKKB. Ubiquitinated via both 'Lys-63'-linked and linear ('Met-1'-linked) polyubiquitin chains in response to T-cell receptor (TCR) activation. Ubiquitination is recognized by IKBKG/NEMO, the regulatory subunit of I-kappa-B kinase (IKK), and is required for TCR-induced NF-kappa-B activation. Linear ubiquitination at Lys-17, Lys-31 and Lys-63 is mediated by RNF31/HOIP; linear ubiquitination is recognized with much higher affinity than 'Lys-63'-linked ubiquitin by IKBKG/NEMO. CARD11 is required for linear ubiquitination by HOIP by promoting the targeting of BCL10 to RNF31/HOIP. Post-translationally, proteolytically cleaved by MALT1; required for T-cell activation. Ubiquitous.

Its subcellular location is the cytoplasm. It is found in the perinuclear region. The protein resides in the membrane raft. Its function is as follows. Plays a key role in both adaptive and innate immune signaling by bridging CARD domain-containing proteins to immune activation. Acts by channeling adaptive and innate immune signaling downstream of CARD domain-containing proteins CARD9, CARD11 and CARD14 to activate NF-kappa-B and MAP kinase p38 (MAPK11, MAPK12, MAPK13 and/or MAPK14) pathways which stimulate expression of genes encoding pro-inflammatory cytokines and chemokines. Recruited by activated CARD domain-containing proteins: homooligomerized CARD domain-containing proteins form a nucleating helical template that recruits BCL10 via CARD-CARD interaction, thereby promoting polymerization of BCL10, subsequent recruitment of MALT1 and formation of a CBM complex. This leads to activation of NF-kappa-B and MAP kinase p38 (MAPK11, MAPK12, MAPK13 and/or MAPK14) pathways which stimulate expression of genes encoding pro-inflammatory cytokines and chemokines. Activated by CARD9 downstream of C-type lectin receptors; CARD9-mediated signals are essential for antifungal immunity. Activated by CARD11 downstream of T-cell receptor (TCR) and B-cell receptor (BCR). Promotes apoptosis, pro-caspase-9 maturation and activation of NF-kappa-B via NIK and IKK. The protein is B-cell lymphoma/leukemia 10 of Homo sapiens (Human).